Reading from the N-terminus, the 312-residue chain is Zinc import ATP-binding protein ZnuC (312 aa).

Residues 13–228 form the ABC transporter domain; that stretch reads VSLEDVGVLR…PEYVRLFGSR (216 aa). 45–52 lines the ATP pocket; sequence GPNGSGKS. A disordered region spans residues 241–312; that stretch reads DHTHLPDGRV…HSRSGEGRHA (72 aa). The span at 243–312 shows a compositional bias: basic and acidic residues; sequence THLPDGRVLH…HSRSGEGRHA (70 aa).

This sequence belongs to the ABC transporter superfamily. Zinc importer (TC 3.A.1.15.5) family. The complex is composed of two ATP-binding proteins (ZnuC), two transmembrane proteins (ZnuB) and a solute-binding protein (ZnuA).

The protein resides in the cell inner membrane. It catalyses the reaction Zn(2+)(out) + ATP(in) + H2O(in) = Zn(2+)(in) + ADP(in) + phosphate(in) + H(+)(in). Functionally, part of the ABC transporter complex ZnuABC involved in zinc import. Responsible for energy coupling to the transport system. In Rhizobium etli (strain ATCC 51251 / DSM 11541 / JCM 21823 / NBRC 15573 / CFN 42), this protein is Zinc import ATP-binding protein ZnuC.